The primary structure comprises 67 residues: Large ribosomal subunit protein uL29 (67 aa).

Belongs to the universal ribosomal protein uL29 family.

The protein is Large ribosomal subunit protein uL29 of Staphylothermus marinus (strain ATCC 43588 / DSM 3639 / JCM 9404 / F1).